A 719-amino-acid chain; its full sequence is Polyribonucleotide nucleotidyltransferase (719 aa).

Mg(2+)-binding residues include Asp-487 and Asp-493. Residues 554–613 (PRIETFKIATDKIREVIGTGGKVIREIVEKTGAKVNIEDDGTVKVASSDGEAMKAAIKWI) form the KH domain. The 69-residue stretch at 623-691 (GQIYDGTVVK…DRGKTRLSMK (69 aa)) folds into the S1 motif domain. The interval 691 to 719 (KVVDQTTGEDLEAKQKDAPAEAPREAAGE) is disordered. Residues 701–719 (LEAKQKDAPAEAPREAAGE) show a composition bias toward basic and acidic residues.

This sequence belongs to the polyribonucleotide nucleotidyltransferase family. Mg(2+) is required as a cofactor.

It localises to the cytoplasm. The catalysed reaction is RNA(n+1) + phosphate = RNA(n) + a ribonucleoside 5'-diphosphate. Involved in mRNA degradation. Catalyzes the phosphorolysis of single-stranded polyribonucleotides processively in the 3'- to 5'-direction. The polypeptide is Polyribonucleotide nucleotidyltransferase (Bradyrhizobium sp. (strain ORS 278)).